The chain runs to 371 residues: Protein STRICTOSIDINE SYNTHASE-LIKE 7 (371 aa).

The signal sequence occupies residues 1 to 25 (MPVLFSSRSLILSIIVPLLISIALY). Residues asparagine 101, asparagine 137, and asparagine 285 are each glycosylated (N-linked (GlcNAc...) asparagine). A Phosphotyrosine modification is found at tyrosine 303.

The protein belongs to the strictosidine synthase family.

The protein localises to the vacuole. The chain is Protein STRICTOSIDINE SYNTHASE-LIKE 7 from Arabidopsis thaliana (Mouse-ear cress).